The following is a 515-amino-acid chain: 1-pyrroline-5-carboxylate dehydrogenase 2 (515 aa).

Residues E286 and C320 contribute to the active site.

The protein belongs to the aldehyde dehydrogenase family. RocA subfamily.

The catalysed reaction is L-glutamate 5-semialdehyde + NAD(+) + H2O = L-glutamate + NADH + 2 H(+). Its pathway is amino-acid degradation; L-proline degradation into L-glutamate; L-glutamate from L-proline: step 2/2. In terms of biological role, important for the use of proline as a sole carbon and energy source or a sole nitrogen source. This chain is 1-pyrroline-5-carboxylate dehydrogenase 2, found in Bacillus subtilis (strain 168).